The primary structure comprises 491 residues: Glycogen synthase (491 aa).

Position 15 (Lys-15) interacts with ADP-alpha-D-glucose.

It belongs to the glycosyltransferase 1 family. Bacterial/plant glycogen synthase subfamily.

It catalyses the reaction [(1-&gt;4)-alpha-D-glucosyl](n) + ADP-alpha-D-glucose = [(1-&gt;4)-alpha-D-glucosyl](n+1) + ADP + H(+). It participates in glycan biosynthesis; glycogen biosynthesis. Functionally, synthesizes alpha-1,4-glucan chains using ADP-glucose. The protein is Glycogen synthase of Hydrogenovibrio crunogenus (strain DSM 25203 / XCL-2) (Thiomicrospira crunogena).